The primary structure comprises 141 residues: Sporulation-specific cell division protein SsgB (141 aa).

The protein belongs to the SsgA family. Interacts with SsgA. Interacts with FtsZ (via N-terminus).

The protein localises to the cell septum. Its function is as follows. Involved in sporulation-specific cell division. Required for early stages of sporulation. Important in the process of growth cessation prior to sporulation-specific cell division. Recruits cell division protein FtsZ to the future septum sites and tethers the contractile ring structure (Z ring) to the cytoplasmic membrane during sporulation. Stimulates polymerization and filament length of FtsZ in vitro. This is Sporulation-specific cell division protein SsgB from Saccharopolyspora erythraea (strain ATCC 11635 / DSM 40517 / JCM 4748 / NBRC 13426 / NCIMB 8594 / NRRL 2338).